Consider the following 281-residue polypeptide: Transcription factor E2F6 (281 aa).

Lysine 9 is covalently cross-linked (Glycyl lysine isopeptide (Lys-Gly) (interchain with G-Cter in SUMO2)). The DNA-binding element occupies 50-129 (YVSMRKALKV…SKNHIRWIGS (80 aa)). A DEF box motif is present at residues 95–129 (KLGVRKRRVYDITNVLDGIDLVEKKSKNHIRWIGS). Residues 130–222 (DLSNFGAVPQ…PAPREDSITV (93 aa)) are dimerization. A leucine-zipper region spans residues 143-164 (LQEELSDLSAMEDALDELIKDC). The transcription repression stretch occupies residues 173–281 (DDKENERLAY…QSEELLEVSN (109 aa)). Residues 241–281 (GQTSNKRSEGVGTSSSESTHPEGPEEEENPQQSEELLEVSN) form a disordered region.

The protein belongs to the E2F/DP family. As to quaternary structure, forms heterodimers with DP family members TFDP1 or TFDP2. Component of the DRTF1/E2F transcription factor complex. Part of the E2F6.com-1 complex in G0 phase composed of E2F6, MGA, MAX, TFDP1, CBX3, BAT8, EUHMTASE1, RING1, RNF2, MBLR, L3MBTL2 and YAF2. Component of some MLL1/MLL complex, at least composed of the core components KMT2A/MLL1, ASH2L, HCFC1/HCF1, WDR5 and RBBP5, as well as the facultative components BACC1, CHD8, E2F6, HSP70, INO80C, KANSL1, LAS1L, MAX, MCRS1, MGA, KAT8/MOF, PELP1, PHF20, PRP31, RING2, RUVB1/TIP49A, RUVB2/TIP49B, SENP3, TAF1, TAF4, TAF6, TAF7, TAF9 and TEX10. As to expression, expressed in all tissues examined. Highest levels in placenta, skeletal muscle, heart, ovary, kidney, small intestine and spleen.

Its subcellular location is the nucleus. Its function is as follows. Inhibitor of E2F-dependent transcription. Binds DNA cooperatively with DP proteins through the E2 recognition site, 5'-TTTC[CG]CGC-3'. Has a preference for the 5'-TTTCCCGC-3' E2F recognition site. E2F6 lacks the transcriptional activation and pocket protein binding domains. Appears to regulate a subset of E2F-dependent genes whose products are required for entry into the cell cycle but not for normal cell cycle progression. Represses expression of some meiosis-specific genes, including SLC25A31/ANT4. May silence expression via the recruitment of a chromatin remodeling complex containing histone H3-K9 methyltransferase activity. Overexpression delays the exit of cells from the S-phase. The sequence is that of Transcription factor E2F6 from Homo sapiens (Human).